Consider the following 283-residue polypeptide: Protease HtpX (283 aa).

Helical transmembrane passes span 4-24 and 33-53; these read ILLF…ILSV and GGIL…SLFL. His-139 provides a ligand contact to Zn(2+). The active site involves Glu-140. Position 143 (His-143) interacts with Zn(2+). 2 helical membrane-spanning segments follow: residues 147-167 and 190-210; these read GDMV…IFLS and IYFL…SIIA. Glu-218 serves as a coordination point for Zn(2+).

This sequence belongs to the peptidase M48B family. It depends on Zn(2+) as a cofactor.

The protein localises to the cell inner membrane. This chain is Protease HtpX, found in Haemophilus influenzae (strain PittGG).